A 211-amino-acid polypeptide reads, in one-letter code: Pyridoxine/pyridoxamine 5'-phosphate oxidase (211 aa).

Substrate contacts are provided by residues 7–10 (RREY) and Lys-65. FMN-binding positions include 60–65 (RIVLLK), 75–76 (YT), Arg-81, Lys-82, and Gln-104. 3 residues coordinate substrate: Tyr-122, Arg-126, and Ser-130. FMN contacts are provided by residues 139–140 (QS) and Trp-184. 190–192 (RLH) contributes to the substrate binding site. Arg-194 provides a ligand contact to FMN.

This sequence belongs to the pyridoxamine 5'-phosphate oxidase family. In terms of assembly, homodimer. The cofactor is FMN.

The catalysed reaction is pyridoxamine 5'-phosphate + O2 + H2O = pyridoxal 5'-phosphate + H2O2 + NH4(+). It carries out the reaction pyridoxine 5'-phosphate + O2 = pyridoxal 5'-phosphate + H2O2. It functions in the pathway cofactor metabolism; pyridoxal 5'-phosphate salvage; pyridoxal 5'-phosphate from pyridoxamine 5'-phosphate: step 1/1. The protein operates within cofactor metabolism; pyridoxal 5'-phosphate salvage; pyridoxal 5'-phosphate from pyridoxine 5'-phosphate: step 1/1. Its function is as follows. Catalyzes the oxidation of either pyridoxine 5'-phosphate (PNP) or pyridoxamine 5'-phosphate (PMP) into pyridoxal 5'-phosphate (PLP). This Photobacterium profundum (strain SS9) protein is Pyridoxine/pyridoxamine 5'-phosphate oxidase.